The chain runs to 101 residues: Small ribosomal subunit protein uS14A (101 aa).

The protein belongs to the universal ribosomal protein uS14 family. In terms of assembly, part of the 30S ribosomal subunit. Contacts proteins S3 and S10.

In terms of biological role, binds 16S rRNA, required for the assembly of 30S particles and may also be responsible for determining the conformation of the 16S rRNA at the A site. The protein is Small ribosomal subunit protein uS14A of Mycolicibacterium smegmatis (strain ATCC 700084 / mc(2)155) (Mycobacterium smegmatis).